Reading from the N-terminus, the 231-residue chain is MAHPAQLGLQNATSPIMEELIAFHDHALMIIFLISSLVLYIISLMLTTKLTHTSTMNAQEIEMVWTILPAIILIMIALPSLRILYMTDEFNKPYLTLKAIGHQWYWSYEYSDYVDLAFDYYITPTYFLEPGEFRLLEVDNRTTLPMEADIRMLISSQDVLHSWAVPSLGVKTDAIPGRLNQAMLASMRPGLFYGQCSEICGSNHSFMPIVLEFIYFQDFEVWASYLYIVSL.

The Mitochondrial intermembrane portion of the chain corresponds to Met1–Ser14. The helical transmembrane segment at Pro15–Met45 threads the bilayer. Residues Leu46–Gln59 are Mitochondrial matrix-facing. The chain crosses the membrane as a helical span at residues Glu60–Thr87. Residues Asp88 to Leu231 lie on the Mitochondrial intermembrane side of the membrane. Residues His161, Cys196, Glu198, Cys200, His204, and Met207 each coordinate Cu cation. Glu198 provides a ligand contact to Mg(2+).

Belongs to the cytochrome c oxidase subunit 2 family. As to quaternary structure, component of the cytochrome c oxidase (complex IV, CIV), a multisubunit enzyme composed of 14 subunits. The complex is composed of a catalytic core of 3 subunits MT-CO1, MT-CO2 and MT-CO3, encoded in the mitochondrial DNA, and 11 supernumerary subunits COX4I, COX5A, COX5B, COX6A, COX6B, COX6C, COX7A, COX7B, COX7C, COX8 and NDUFA4, which are encoded in the nuclear genome. The complex exists as a monomer or a dimer and forms supercomplexes (SCs) in the inner mitochondrial membrane with NADH-ubiquinone oxidoreductase (complex I, CI) and ubiquinol-cytochrome c oxidoreductase (cytochrome b-c1 complex, complex III, CIII), resulting in different assemblies (supercomplex SCI(1)III(2)IV(1) and megacomplex MCI(2)III(2)IV(2)). Found in a complex with TMEM177, COA6, COX18, COX20, SCO1 and SCO2. Interacts with TMEM177 in a COX20-dependent manner. Interacts with COX20. Interacts with COX16. It depends on Cu cation as a cofactor.

The protein localises to the mitochondrion inner membrane. It catalyses the reaction 4 Fe(II)-[cytochrome c] + O2 + 8 H(+)(in) = 4 Fe(III)-[cytochrome c] + 2 H2O + 4 H(+)(out). Its function is as follows. Component of the cytochrome c oxidase, the last enzyme in the mitochondrial electron transport chain which drives oxidative phosphorylation. The respiratory chain contains 3 multisubunit complexes succinate dehydrogenase (complex II, CII), ubiquinol-cytochrome c oxidoreductase (cytochrome b-c1 complex, complex III, CIII) and cytochrome c oxidase (complex IV, CIV), that cooperate to transfer electrons derived from NADH and succinate to molecular oxygen, creating an electrochemical gradient over the inner membrane that drives transmembrane transport and the ATP synthase. Cytochrome c oxidase is the component of the respiratory chain that catalyzes the reduction of oxygen to water. Electrons originating from reduced cytochrome c in the intermembrane space (IMS) are transferred via the dinuclear copper A center (CU(A)) of subunit 2 and heme A of subunit 1 to the active site in subunit 1, a binuclear center (BNC) formed by heme A3 and copper B (CU(B)). The BNC reduces molecular oxygen to 2 water molecules using 4 electrons from cytochrome c in the IMS and 4 protons from the mitochondrial matrix. This is Cytochrome c oxidase subunit 2 (MT-CO2) from Lagothrix lagotricha (Brown woolly monkey).